The following is a 313-amino-acid chain: DNA-directed RNA polymerase subunit alpha (313 aa).

The tract at residues 1 to 227 is alpha N-terminal domain (alpha-NTD); it reads MMLDVAPPRF…DFFGLFAEGY (227 aa). Residues 242-313 are alpha C-terminal domain (alpha-CTD); that stretch reads RPVITDERPI…YGYTLESGRE (72 aa).

It belongs to the RNA polymerase alpha chain family. Homodimer. The RNAP catalytic core consists of 2 alpha, 1 beta, 1 beta' and 1 omega subunit. When a sigma factor is associated with the core the holoenzyme is formed, which can initiate transcription.

It catalyses the reaction RNA(n) + a ribonucleoside 5'-triphosphate = RNA(n+1) + diphosphate. Functionally, DNA-dependent RNA polymerase catalyzes the transcription of DNA into RNA using the four ribonucleoside triphosphates as substrates. This is DNA-directed RNA polymerase subunit alpha from Rubrobacter xylanophilus (strain DSM 9941 / JCM 11954 / NBRC 16129 / PRD-1).